We begin with the raw amino-acid sequence, 73 residues long: Large ribosomal subunit protein bL31 (73 aa).

The Zn(2+) site is built by C16, C18, C38, and C41.

It belongs to the bacterial ribosomal protein bL31 family. Type A subfamily. In terms of assembly, part of the 50S ribosomal subunit. Zn(2+) serves as cofactor.

In terms of biological role, binds the 23S rRNA. The protein is Large ribosomal subunit protein bL31 of Vibrio vulnificus (strain YJ016).